Here is a 313-residue protein sequence, read N- to C-terminus: D-alanine--D-alanine ligase (313 aa).

An ATP-grasp domain is found at 108–308; it reads KLVWQQTGVP…YSELVVKVLS (201 aa). 138-193 serves as a coordination point for ATP; sequence VAKLGLPLFVKPASEGSSVAVLKVKTADALPAALSEAATHDKIVIVEKSIEGGGEY. Positions 262, 275, and 277 each coordinate Mg(2+).

The protein belongs to the D-alanine--D-alanine ligase family. Mg(2+) is required as a cofactor. Mn(2+) serves as cofactor.

It is found in the cytoplasm. It catalyses the reaction 2 D-alanine + ATP = D-alanyl-D-alanine + ADP + phosphate + H(+). Its pathway is cell wall biogenesis; peptidoglycan biosynthesis. Functionally, cell wall formation. The protein is D-alanine--D-alanine ligase of Burkholderia ambifaria (strain MC40-6).